A 303-amino-acid polypeptide reads, in one-letter code: Pseudouridine-5'-phosphate glycosidase (303 aa).

Residue Glu-25 is the Proton donor of the active site. The substrate site is built by Lys-87 and Val-107. A Mn(2+)-binding site is contributed by Asp-139. Residue 141-143 (SAD) participates in substrate binding. Residue Lys-160 is the Nucleophile of the active site.

The protein belongs to the pseudouridine-5'-phosphate glycosidase family. Homotrimer. Mn(2+) serves as cofactor.

The catalysed reaction is D-ribose 5-phosphate + uracil = psi-UMP + H2O. Its function is as follows. Catalyzes the reversible cleavage of pseudouridine 5'-phosphate (PsiMP) to ribose 5-phosphate and uracil. Functions biologically in the cleavage direction, as part of a pseudouridine degradation pathway. The chain is Pseudouridine-5'-phosphate glycosidase from Hahella chejuensis (strain KCTC 2396).